We begin with the raw amino-acid sequence, 437 residues long: GTPase Obg (437 aa).

One can recognise an Obg domain in the interval 2–161 (SDFIDRALIT…RELQLELKVI (160 aa)). Positions 162 to 335 (ADVGLVGFPN…LQRRIVDILR (174 aa)) constitute an OBG-type G domain. GTP is bound by residues 168-175 (GFPNAGKS), 193-197 (FTTLS), 214-217 (DIPG), 284-287 (NKTD), and 316-318 (SAA). Mg(2+)-binding residues include serine 175 and threonine 195. In terms of domain architecture, OCT spans 355-433 (FSNIDPNDFW…IEKAELLWQD (79 aa)).

Belongs to the TRAFAC class OBG-HflX-like GTPase superfamily. OBG GTPase family. In terms of assembly, monomer. The cofactor is Mg(2+).

It is found in the cytoplasm. In terms of biological role, an essential GTPase which binds GTP, GDP and possibly (p)ppGpp with moderate affinity, with high nucleotide exchange rates and a fairly low GTP hydrolysis rate. Plays a role in control of the cell cycle, stress response, ribosome biogenesis and in those bacteria that undergo differentiation, in morphogenesis control. The polypeptide is GTPase Obg (Herpetosiphon aurantiacus (strain ATCC 23779 / DSM 785 / 114-95)).